The sequence spans 168 residues: 2-C-methyl-D-erythritol 2,4-cyclodiphosphate synthase (168 aa).

2 residues coordinate a divalent metal cation: Asp-8 and His-10. Residues 8 to 10 (DLH) and 34 to 35 (HS) contribute to the 4-CDP-2-C-methyl-D-erythritol 2-phosphate site. His-42 is an a divalent metal cation binding site. 4-CDP-2-C-methyl-D-erythritol 2-phosphate-binding positions include 56 to 58 (DIG), 61 to 65 (FPDTD), 132 to 135 (TTTE), and Arg-142.

This sequence belongs to the IspF family. As to quaternary structure, homotrimer. A divalent metal cation serves as cofactor.

The catalysed reaction is 4-CDP-2-C-methyl-D-erythritol 2-phosphate = 2-C-methyl-D-erythritol 2,4-cyclic diphosphate + CMP. It functions in the pathway isoprenoid biosynthesis; isopentenyl diphosphate biosynthesis via DXP pathway; isopentenyl diphosphate from 1-deoxy-D-xylulose 5-phosphate: step 4/6. Functionally, involved in the biosynthesis of isopentenyl diphosphate (IPP) and dimethylallyl diphosphate (DMAPP), two major building blocks of isoprenoid compounds. Catalyzes the conversion of 4-diphosphocytidyl-2-C-methyl-D-erythritol 2-phosphate (CDP-ME2P) to 2-C-methyl-D-erythritol 2,4-cyclodiphosphate (ME-CPP) with a corresponding release of cytidine 5-monophosphate (CMP). This chain is 2-C-methyl-D-erythritol 2,4-cyclodiphosphate synthase, found in Desulfosudis oleivorans (strain DSM 6200 / JCM 39069 / Hxd3) (Desulfococcus oleovorans).